A 1120-amino-acid chain; its full sequence is Putative GTPase-activating protein AN11010 (1120 aa).

In terms of domain architecture, Rab-GAP TBC spans 291–479 (GLPNRLRGEI…RVLDVFFLEG (189 aa)). Disordered regions lie at residues 673–702 (DSPG…PSPA), 859–903 (DEVK…PNNP), 960–979 (AAKQ…SGGI), 1017–1068 (RNAL…ETDR), and 1081–1120 (GKDD…EFES). The span at 864–878 (ESTPSPEGETPGTPS) shows a compositional bias: low complexity. Residues 960-970 (AAKQQPTSSGP) show a composition bias toward polar residues. A compositionally biased stretch (acidic residues) spans 1023-1032 (DDDDEDDEDD). 2 stretches are compositionally biased toward basic and acidic residues: residues 1057-1068 (DPERRSVRETDR) and 1081-1095 (GKDD…DSHQ).

The polypeptide is Putative GTPase-activating protein AN11010 (Emericella nidulans (strain FGSC A4 / ATCC 38163 / CBS 112.46 / NRRL 194 / M139) (Aspergillus nidulans)).